Here is a 408-residue protein sequence, read N- to C-terminus: Putative mannan endo-1,4-beta-mannosidase 4 (408 aa).

An N-terminal signal peptide occupies residues 1-23 (MKCLCFIVLLAIVIAQSYVGVEA). A glycan (N-linked (GlcNAc...) asparagine) is linked at Asn73. Residues Trp85 and Asn201 each contribute to the substrate site. Residue Glu202 is the Proton donor of the active site. The Nucleophile role is filled by Glu322. Residue Trp364 participates in substrate binding.

It belongs to the glycosyl hydrolase 5 (cellulase A) family.

It is found in the secreted. It carries out the reaction Random hydrolysis of (1-&gt;4)-beta-D-mannosidic linkages in mannans, galactomannans and glucomannans.. The protein is Putative mannan endo-1,4-beta-mannosidase 4 (MAN4) of Arabidopsis thaliana (Mouse-ear cress).